Consider the following 230-residue polypeptide: Cytidylate kinase (230 aa).

12 to 20 (GPSGAGKST) serves as a coordination point for ATP.

This sequence belongs to the cytidylate kinase family. Type 1 subfamily.

It is found in the cytoplasm. It carries out the reaction CMP + ATP = CDP + ADP. It catalyses the reaction dCMP + ATP = dCDP + ADP. This is Cytidylate kinase from Corynebacterium diphtheriae (strain ATCC 700971 / NCTC 13129 / Biotype gravis).